The sequence spans 172 residues: MIDLGISKLALIGAVALVVIGPERLPKVARTAGALIGRAQRYIADVKAEVSREIELEELRKMRTEFEEAARNVEQTIHQEVSRHTSEINERLNEALGDPASRQTATQAAEWRPAPAKSRNGRNSWRNKQLAMPKWYRRKQGVRMWAQSGAARVKRHRPPIVAAQSRGRSFFE.

A helical transmembrane segment spans residues 1–21 (MIDLGISKLALIGAVALVVIG). The tract at residues 97 to 129 (GDPASRQTATQAAEWRPAPAKSRNGRNSWRNKQ) is disordered.

This sequence belongs to the TatB family. The Tat system comprises two distinct complexes: a TatABC complex, containing multiple copies of TatA, TatB and TatC subunits, and a separate TatA complex, containing only TatA subunits. Substrates initially bind to the TatABC complex, which probably triggers association of the separate TatA complex to form the active translocon.

It is found in the cell inner membrane. In terms of biological role, part of the twin-arginine translocation (Tat) system that transports large folded proteins containing a characteristic twin-arginine motif in their signal peptide across membranes. Together with TatC, TatB is part of a receptor directly interacting with Tat signal peptides. TatB may form an oligomeric binding site that transiently accommodates folded Tat precursor proteins before their translocation. This Ralstonia nicotianae (strain ATCC BAA-1114 / GMI1000) (Ralstonia solanacearum) protein is Sec-independent protein translocase protein TatB.